The sequence spans 416 residues: Gamma-glutamyl phosphate reductase (416 aa).

It belongs to the gamma-glutamyl phosphate reductase family.

Its subcellular location is the cytoplasm. It carries out the reaction L-glutamate 5-semialdehyde + phosphate + NADP(+) = L-glutamyl 5-phosphate + NADPH + H(+). It participates in amino-acid biosynthesis; L-proline biosynthesis; L-glutamate 5-semialdehyde from L-glutamate: step 2/2. Its function is as follows. Catalyzes the NADPH-dependent reduction of L-glutamate 5-phosphate into L-glutamate 5-semialdehyde and phosphate. The product spontaneously undergoes cyclization to form 1-pyrroline-5-carboxylate. This chain is Gamma-glutamyl phosphate reductase, found in Streptococcus pyogenes serotype M4 (strain MGAS10750).